Here is a 326-residue protein sequence, read N- to C-terminus: Phospho-N-acetylmuramoyl-pentapeptide-transferase (326 aa).

The next 9 helical transmembrane spans lie at 3–23 (ISIS…PAFI), 51–71 (TMGG…VALF), 79–99 (VGMI…DDFL), 115–135 (LALQ…GGDM), 138–158 (VFGY…FWLV), 169–189 (GIDG…GVIA), 195–215 (MDIL…FVFN), 221–243 (VFMG…MALH), and 306–326 (FFFW…LYLM).

The protein belongs to the glycosyltransferase 4 family. MraY subfamily. Requires Mg(2+) as cofactor.

The protein localises to the cell membrane. The catalysed reaction is UDP-N-acetyl-alpha-D-muramoyl-L-alanyl-gamma-D-glutamyl-L-lysyl-D-alanyl-D-alanine + di-trans,octa-cis-undecaprenyl phosphate = Mur2Ac(oyl-L-Ala-gamma-D-Glu-L-Lys-D-Ala-D-Ala)-di-trans,octa-cis-undecaprenyl diphosphate + UMP. Its pathway is cell wall biogenesis; peptidoglycan biosynthesis. Catalyzes the initial step of the lipid cycle reactions in the biosynthesis of the cell wall peptidoglycan: transfers peptidoglycan precursor phospho-MurNAc-pentapeptide from UDP-MurNAc-pentapeptide onto the lipid carrier undecaprenyl phosphate, yielding undecaprenyl-pyrophosphoryl-MurNAc-pentapeptide, known as lipid I. The chain is Phospho-N-acetylmuramoyl-pentapeptide-transferase from Streptococcus pneumoniae (strain Taiwan19F-14).